The chain runs to 463 residues: L-cystine uptake protein TcyP (463 aa).

The next 10 helical transmembrane spans lie at Thr-3–Met-23, Val-34–Pro-54, Tyr-73–Phe-93, Ile-105–Ile-125, Pro-184–Val-204, Ile-225–Met-245, Met-262–Leu-282, Leu-338–Ala-358, Val-369–Gly-389, and Phe-394–Ile-414.

Belongs to the dicarboxylate/amino acid:cation symporter (DAACS) (TC 2.A.23) family.

The protein resides in the cell membrane. Mediates uptake of L-cystine, the oxidized form of L-cysteine. Although it is more specific for L-cystine, it could also transport a much broader range of amino acids and sulfur compounds including S-methylcysteine. The protein is L-cystine uptake protein TcyP (tcyP) of Bacillus subtilis (strain 168).